A 334-amino-acid polypeptide reads, in one-letter code: Aspartate carbamoyltransferase catalytic subunit (334 aa).

Residues arginine 71 and threonine 72 each contribute to the carbamoyl phosphate site. Lysine 99 is a binding site for L-aspartate. Arginine 121, histidine 151, and glutamine 154 together coordinate carbamoyl phosphate. L-aspartate-binding residues include arginine 184 and arginine 239. Carbamoyl phosphate is bound by residues glycine 280 and proline 281.

Belongs to the aspartate/ornithine carbamoyltransferase superfamily. ATCase family. Heterododecamer (2C3:3R2) of six catalytic PyrB chains organized as two trimers (C3), and six regulatory PyrI chains organized as three dimers (R2).

It catalyses the reaction carbamoyl phosphate + L-aspartate = N-carbamoyl-L-aspartate + phosphate + H(+). Its pathway is pyrimidine metabolism; UMP biosynthesis via de novo pathway; (S)-dihydroorotate from bicarbonate: step 2/3. Catalyzes the condensation of carbamoyl phosphate and aspartate to form carbamoyl aspartate and inorganic phosphate, the committed step in the de novo pyrimidine nucleotide biosynthesis pathway. The chain is Aspartate carbamoyltransferase catalytic subunit from Pseudomonas syringae pv. syringae (strain B728a).